A 43-amino-acid polypeptide reads, in one-letter code: METATVLIIFIASLLLGLTGYSIYTAFGPNSKELRDPFDDHED.

The chain crosses the membrane as a helical span at residues 7 to 27 (LIIFIASLLLGLTGYSIYTAF).

The protein belongs to the PsbN family.

The protein localises to the plastid. It is found in the chloroplast thylakoid membrane. May play a role in photosystem I and II biogenesis. This chain is Protein PsbN, found in Guillardia theta (Cryptophyte).